The chain runs to 335 residues: Phosphate acyltransferase (335 aa).

It belongs to the PlsX family. In terms of assembly, homodimer. Probably interacts with PlsY.

The protein resides in the cytoplasm. The enzyme catalyses a fatty acyl-[ACP] + phosphate = an acyl phosphate + holo-[ACP]. It participates in lipid metabolism; phospholipid metabolism. Catalyzes the reversible formation of acyl-phosphate (acyl-PO(4)) from acyl-[acyl-carrier-protein] (acyl-ACP). This enzyme utilizes acyl-ACP as fatty acyl donor, but not acyl-CoA. The chain is Phosphate acyltransferase from Clostridium botulinum (strain ATCC 19397 / Type A).